A 197-amino-acid polypeptide reads, in one-letter code: Imidazoleglycerol-phosphate dehydratase (197 aa).

It belongs to the imidazoleglycerol-phosphate dehydratase family.

The protein resides in the cytoplasm. It catalyses the reaction D-erythro-1-(imidazol-4-yl)glycerol 3-phosphate = 3-(imidazol-4-yl)-2-oxopropyl phosphate + H2O. Its pathway is amino-acid biosynthesis; L-histidine biosynthesis; L-histidine from 5-phospho-alpha-D-ribose 1-diphosphate: step 6/9. In Leptospira biflexa serovar Patoc (strain Patoc 1 / Ames), this protein is Imidazoleglycerol-phosphate dehydratase.